Reading from the N-terminus, the 1026-residue chain is Multidrug resistance protein MdtC (1026 aa).

Transmembrane regions (helical) follow at residues 12–32 (VATT…FSLL), 333–353 (EVEQ…FIFL), 360–380 (LIPA…MYLC), 387–407 (LSLM…IVVL), 431–451 (VGFT…PLLL), 463–483 (FAVT…TLTP), 528–548 (WVLA…VSIP), 853–873 (LLLI…LYES), 897–917 (LFGA…IGIV), 953–973 (PIMM…LTHG), and 984–1004 (ITIV…TPVV).

This sequence belongs to the resistance-nodulation-cell division (RND) (TC 2.A.6) family. MdtC subfamily. Part of a tripartite efflux system composed of MdtA, MdtB and MdtC. MdtC forms a heteromultimer with MdtB.

It localises to the cell inner membrane. The chain is Multidrug resistance protein MdtC from Serratia proteamaculans (strain 568).